Here is a 253-residue protein sequence, read N- to C-terminus: Imidazole glycerol phosphate synthase subunit HisF (253 aa).

Active-site residues include aspartate 11 and aspartate 130.

The protein belongs to the HisA/HisF family. Heterodimer of HisH and HisF.

Its subcellular location is the cytoplasm. It carries out the reaction 5-[(5-phospho-1-deoxy-D-ribulos-1-ylimino)methylamino]-1-(5-phospho-beta-D-ribosyl)imidazole-4-carboxamide + L-glutamine = D-erythro-1-(imidazol-4-yl)glycerol 3-phosphate + 5-amino-1-(5-phospho-beta-D-ribosyl)imidazole-4-carboxamide + L-glutamate + H(+). The protein operates within amino-acid biosynthesis; L-histidine biosynthesis; L-histidine from 5-phospho-alpha-D-ribose 1-diphosphate: step 5/9. In terms of biological role, IGPS catalyzes the conversion of PRFAR and glutamine to IGP, AICAR and glutamate. The HisF subunit catalyzes the cyclization activity that produces IGP and AICAR from PRFAR using the ammonia provided by the HisH subunit. The polypeptide is Imidazole glycerol phosphate synthase subunit HisF (Desulfitobacterium hafniense (strain DSM 10664 / DCB-2)).